The chain runs to 210 residues: Putative methyltransferase ECU09_1500 (210 aa).

The protein belongs to the methyltransferase superfamily.

The chain is Putative methyltransferase ECU09_1500 from Encephalitozoon cuniculi (strain GB-M1) (Microsporidian parasite).